The chain runs to 984 residues: Mineralocorticoid receptor (984 aa).

A modulating region spans residues 1 to 602 (METKGYHSLP…STGSSRPSKI (602 aa)). The segment covering 231–243 (QGTPLTCSPNVEN) has biased composition (polar residues). Disordered regions lie at residues 231 to 329 (QGTP…AAST) and 347 to 373 (GTSA…QEVP). Phosphoserine occurs at positions 250, 259, 283, 287, and 299. Over residues 259–291 (SPLSSPLSSMKSSISSPPSHCSVKSPVSSPNNV) the composition is skewed to low complexity. Residues 292–329 (TLRSSVSSPANINNSRCSVSSPSNTNNRSTLSSPAAST) are compositionally biased toward polar residues. Zn(2+) is bound by residues Cys-603, Cys-606, Cys-620, Cys-623, Cys-639, Cys-645, Cys-655, and Cys-658. NR C4-type zinc fingers lie at residues 603–623 (CLVC…CGSC) and 639–663 (CAGR…LQKC). Positions 603 to 668 (CLVCGDEASG…RLQKCLQAGM (66 aa)) form a DNA-binding region, nuclear receptor. A hinge region spans residues 669–725 (NLGARKSKKLGKLKGIHEEQPQQQQPPPPPPPPQSPEEGTTYIAPAKEPSVNTALVP). Positions 684-710 (IHEEQPQQQQPPPPPPPPQSPEEGTTY) are disordered. The span at 692–703 (QQPPPPPPPPQS) shows a compositional bias: pro residues. The 239-residue stretch at 726–964 (QLSTISRALT…EFPAMLVEII (239 aa)) folds into the NR LBD domain. 2 residues coordinate 21-hydroxyprogesterone: Asn-770 and Gln-776. Aldosterone contacts are provided by Asn-770 and Gln-776. 2 residues coordinate progesterone: Asn-770 and Gln-776. An important for coactivator binding region spans residues 782–785 (KWAK). 21-hydroxyprogesterone-binding residues include Arg-817 and Thr-945. 2 residues coordinate aldosterone: Arg-817 and Thr-945. The progesterone site is built by Arg-817 and Thr-945.

The protein belongs to the nuclear hormone receptor family. NR3 subfamily. In terms of assembly, heteromultimeric cytoplasmic complex with HSP90, HSP70, and FKBP4, in the absence of ligand. After ligand binding, it translocates to the nucleus and binds to DNA as a homodimer and as a heterodimer with NR3C1. May interact with HSD11B2 in the absence of ligand. Binds the coactivators NCOA1, NCOA2, TIF1 and NRIP1. Phosphorylated. As to expression, ubiquitous. Highly expressed in distal tubules, convoluted tubules and cortical collecting duct in kidney, and in sweat glands. Detected at lower levels in cardiomyocytes, in epidermis and in colon enterocytes.

It is found in the cytoplasm. The protein resides in the nucleus. The protein localises to the endoplasmic reticulum membrane. Functionally, receptor for both mineralocorticoids (MC) such as aldosterone and glucocorticoids (GC) such as corticosterone or cortisol. Binds to mineralocorticoid response elements (MRE) and transactivates target genes. The effect of MC is to increase ion and water transport and thus raise extracellular fluid volume and blood pressure and lower potassium levels. This is Mineralocorticoid receptor (NR3C2) from Homo sapiens (Human).